Reading from the N-terminus, the 184-residue chain is Photosynthetic apparatus regulatory protein RegA (184 aa).

The Response regulatory domain occupies 14-128; it reads SLLLVDDDNA…DITNALLAKG (115 aa). D63 carries the post-translational modification 4-aspartylphosphate.

In terms of processing, phosphorylated by RegB.

In terms of biological role, member of the two-component regulatory system RegB/RegA. Involved in transactivating anaerobic expression of the photosynthetic apparatus. It is a transcriptional regulator that is responsible for activating expression of the puf, puh, and puc operons in response to a decrease in oxygen tension. In Rhodobacter capsulatus (Rhodopseudomonas capsulata), this protein is Photosynthetic apparatus regulatory protein RegA (regA).